A 370-amino-acid chain; its full sequence is 3-isopropylmalate dehydrogenase (370 aa).

77–90 provides a ligand contact to NAD(+); that stretch reads GPKWDSVPYEVRPE. Substrate contacts are provided by Arg-97, Arg-107, Arg-135, and Asp-226. Mg(2+) is bound by residues Asp-226, Asp-250, and Asp-254. 290-302 lines the NAD(+) pocket; sequence GSAPDIAGKGIAN.

This sequence belongs to the isocitrate and isopropylmalate dehydrogenases family. LeuB type 1 subfamily. As to quaternary structure, homodimer. It depends on Mg(2+) as a cofactor. Mn(2+) is required as a cofactor.

It is found in the cytoplasm. It catalyses the reaction (2R,3S)-3-isopropylmalate + NAD(+) = 4-methyl-2-oxopentanoate + CO2 + NADH. It participates in amino-acid biosynthesis; L-leucine biosynthesis; L-leucine from 3-methyl-2-oxobutanoate: step 3/4. Its function is as follows. Catalyzes the oxidation of 3-carboxy-2-hydroxy-4-methylpentanoate (3-isopropylmalate) to 3-carboxy-4-methyl-2-oxopentanoate. The product decarboxylates to 4-methyl-2 oxopentanoate. The chain is 3-isopropylmalate dehydrogenase from Rhizobium etli (strain ATCC 51251 / DSM 11541 / JCM 21823 / NBRC 15573 / CFN 42).